A 38-amino-acid chain; its full sequence is Large ribosomal subunit protein bL36 (38 aa).

Belongs to the bacterial ribosomal protein bL36 family.

The polypeptide is Large ribosomal subunit protein bL36 (Porphyromonas gingivalis (strain ATCC 33277 / DSM 20709 / CIP 103683 / JCM 12257 / NCTC 11834 / 2561)).